The following is a 219-amino-acid chain: Interleukin-12 subunit alpha (219 aa).

The signal sequence occupies residues 1-22 (MCPARSLLLVATLVLLDYLSLA). 3 N-linked (GlcNAc...) asparagine glycosylation sites follow: asparagine 24, asparagine 93, and asparagine 107. Intrachain disulfides connect cysteine 37/cysteine 110, cysteine 64/cysteine 196, and cysteine 85/cysteine 123.

Belongs to the IL-6 superfamily. As to quaternary structure, heterodimer with IL12B; disulfide-linked. This heterodimer is known as interleukin IL-12. Heterodimer with EBI3/IL27B; not disulfide-linked. This heterodimer is known as interleukin IL-35. Interacts with NBR1; this interaction promotes IL-12 secretion.

It is found in the secreted. Heterodimerizes with IL12B to form the IL-12 cytokine or with EBI3/IL27B to form the IL-35 cytokine. IL-12 is primarily produced by professional antigen-presenting cells (APCs) such as B-cells and dendritic cells (DCs) as well as macrophages and granulocytes and regulates T-cell and natural killer-cell responses, induces the production of interferon-gamma (IFN-gamma), favors the differentiation of T-helper 1 (Th1) cells and is an important link between innate resistance and adaptive immunity. Mechanistically, exerts its biological effects through a receptor composed of IL12R1 and IL12R2 subunits. Binding to the receptor results in the rapid tyrosine phosphorylation of a number of cellular substrates including the JAK family kinases TYK2 and JAK2. In turn, recruited STAT4 gets phosphorylated and translocates to the nucleus where it regulates cytokine/growth factor responsive genes. As part of IL-35, plays essential roles in maintaining the immune homeostasis of the liver microenvironment and also functions as an immune-suppressive cytokine. Mediates biological events through unconventional receptors composed of IL12RB2 and gp130/IL6ST heterodimers or homodimers. Signaling requires the transcription factors STAT1 and STAT4, which form a unique heterodimer that binds to distinct DNA sites. This chain is Interleukin-12 subunit alpha (IL12A), found in Cercocebus atys (Sooty mangabey).